Here is a 634-residue protein sequence, read N- to C-terminus: DNA-directed RNA polymerase subunit gamma (634 aa).

Zn(2+) is bound by residues cysteine 74, cysteine 76, cysteine 89, and cysteine 92. 3 residues coordinate Mg(2+): aspartate 471, aspartate 473, and aspartate 475.

The protein belongs to the RNA polymerase beta' chain family. RpoC1 subfamily. As to quaternary structure, in cyanobacteria the RNAP catalytic core is composed of 2 alpha, 1 beta, 1 beta', 1 gamma and 1 omega subunit. When a sigma factor is associated with the core the holoenzyme is formed, which can initiate transcription. It depends on Mg(2+) as a cofactor. The cofactor is Zn(2+).

It carries out the reaction RNA(n) + a ribonucleoside 5'-triphosphate = RNA(n+1) + diphosphate. Its function is as follows. DNA-dependent RNA polymerase catalyzes the transcription of DNA into RNA using the four ribonucleoside triphosphates as substrates. In Prochlorococcus marinus (strain SARG / CCMP1375 / SS120), this protein is DNA-directed RNA polymerase subunit gamma.